A 667-amino-acid polypeptide reads, in one-letter code: Protein angel homolog 1 (667 aa).

Residues Ser-77 and Ser-105 each carry the phosphoserine modification.

Belongs to the CCR4/nocturin family.

The chain is Protein angel homolog 1 from Mus musculus (Mouse).